Reading from the N-terminus, the 258-residue chain is MSIDAKLVKELREKTGAGMMDCKKALEDSGGDMEKAITWLRQKGLAGAAKKASRVAAEGAVDSYIHFGNRIGVLVEVNCETDFVARNEDFKKLVQDIAKQIAACQNVEYVSVDQIPAEVVEREKAIEMGKEDLANKPENIREKIVQGRIEKRLKELSLLDQPFIKDSSITVEELVKQHIAKLGENIRVRRFVRFVLGEGIEKEEVDFAAEVAAQAGLKPAEAPKVEETPPAPPEEPAPEPAPAAESKPAKKGSAKKKK.

The interval 81–84 (TDFV) is involved in Mg(2+) ion dislocation from EF-Tu. The interval 216-258 (GLKPAEAPKVEETPPAPPEEPAPEPAPAAESKPAKKGSAKKKK) is disordered. Pro residues predominate over residues 229–241 (PPAPPEEPAPEPA). Residues 249–258 (AKKGSAKKKK) are compositionally biased toward basic residues.

The protein belongs to the EF-Ts family.

It localises to the cytoplasm. Its function is as follows. Associates with the EF-Tu.GDP complex and induces the exchange of GDP to GTP. It remains bound to the aminoacyl-tRNA.EF-Tu.GTP complex up to the GTP hydrolysis stage on the ribosome. The protein is Elongation factor Ts of Synechococcus sp. (strain JA-2-3B'a(2-13)) (Cyanobacteria bacterium Yellowstone B-Prime).